A 280-amino-acid chain; its full sequence is Tryptophan synthase alpha chain (280 aa).

Active-site proton acceptor residues include E49 and D60.

It belongs to the TrpA family. As to quaternary structure, tetramer of two alpha and two beta chains.

The catalysed reaction is (1S,2R)-1-C-(indol-3-yl)glycerol 3-phosphate + L-serine = D-glyceraldehyde 3-phosphate + L-tryptophan + H2O. The protein operates within amino-acid biosynthesis; L-tryptophan biosynthesis; L-tryptophan from chorismate: step 5/5. The alpha subunit is responsible for the aldol cleavage of indoleglycerol phosphate to indole and glyceraldehyde 3-phosphate. The polypeptide is Tryptophan synthase alpha chain (Corynebacterium glutamicum (strain R)).